A 1038-amino-acid chain; its full sequence is Isoleucine--tRNA ligase (1038 aa).

The 'HIGH' region motif lies at 48–58; it reads PTANGKPHVGH. The 'KMSKS' region motif lies at 590 to 594; that stretch reads KMSKS. K593 lines the ATP pocket.

The protein belongs to the class-I aminoacyl-tRNA synthetase family. IleS type 2 subfamily. As to quaternary structure, monomer. It depends on Zn(2+) as a cofactor.

Its subcellular location is the cytoplasm. It carries out the reaction tRNA(Ile) + L-isoleucine + ATP = L-isoleucyl-tRNA(Ile) + AMP + diphosphate. Its function is as follows. Catalyzes the attachment of isoleucine to tRNA(Ile). As IleRS can inadvertently accommodate and process structurally similar amino acids such as valine, to avoid such errors it has two additional distinct tRNA(Ile)-dependent editing activities. One activity is designated as 'pretransfer' editing and involves the hydrolysis of activated Val-AMP. The other activity is designated 'posttransfer' editing and involves deacylation of mischarged Val-tRNA(Ile). The protein is Isoleucine--tRNA ligase of Clostridium novyi (strain NT).